The chain runs to 297 residues: 4-hydroxy-tetrahydrodipicolinate synthase (297 aa).

Residue T47 coordinates pyruvate. Y136 acts as the Proton donor/acceptor in catalysis. The active-site Schiff-base intermediate with substrate is the K165. Residue T206 participates in pyruvate binding.

It belongs to the DapA family. In terms of assembly, homotetramer; dimer of dimers.

It is found in the cytoplasm. It catalyses the reaction L-aspartate 4-semialdehyde + pyruvate = (2S,4S)-4-hydroxy-2,3,4,5-tetrahydrodipicolinate + H2O + H(+). The protein operates within amino-acid biosynthesis; L-lysine biosynthesis via DAP pathway; (S)-tetrahydrodipicolinate from L-aspartate: step 3/4. Its function is as follows. Catalyzes the condensation of (S)-aspartate-beta-semialdehyde [(S)-ASA] and pyruvate to 4-hydroxy-tetrahydrodipicolinate (HTPA). The polypeptide is 4-hydroxy-tetrahydrodipicolinate synthase (Sulfurovum sp. (strain NBC37-1)).